The following is a 513-amino-acid chain: Putative GMP synthase [glutamine-hydrolyzing] (513 aa).

The region spanning 8–198 (MIVVLDFGGQ…AFAVCGCEGN (191 aa)) is the Glutamine amidotransferase type-1 domain. Cys85 serves as the catalytic Nucleophile. Residue Glu174 is part of the active site. The GMPS ATP-PPase domain maps to 199-388 (WSMENFIELE…LGIPDEVVWR (190 aa)). 226 to 232 (SGGVDSS) lines the ATP pocket.

Homodimer.

The catalysed reaction is XMP + L-glutamine + ATP + H2O = GMP + L-glutamate + AMP + diphosphate + 2 H(+). It functions in the pathway purine metabolism; GMP biosynthesis; GMP from XMP (L-Gln route): step 1/1. Functionally, catalyzes the synthesis of GMP from XMP. This Halalkalibacterium halodurans (strain ATCC BAA-125 / DSM 18197 / FERM 7344 / JCM 9153 / C-125) (Bacillus halodurans) protein is Putative GMP synthase [glutamine-hydrolyzing] (guaA).